The sequence spans 1558 residues: MQFITGPKLNGAAASTGALSPEVIAVYPMTKAQESLWLAYSMAPNHTLYNLSLKFVFNQTEAASDGSIAIRDLTRRHAILRSTFHGANQSQARPFVAEHNPDTATASFRIVPKPRDARGEAKVLGLLRTAVNLSQEFASRWLAVVSDREIELYLVAHHIALDGTSMSSISAELFKLLSGSPATPAEQPFCQAHMYEVITYIVRRFSSRRILTPFKAAFSASPEYQAAERFWLDQVMHVRPYKWITNPSSRPAPSKSYREIQTWFDFSKDDLAAWGSKYRTSWFRVAVAMVGLLTRAHTEPDYGADQTVTVAFGGRPAGLEKSIGHFANAMPIRIPFTEASRKTSGAAQVSFDNLVKLVSKQISTAKKHERYSILDLSRARASRGLETPRAQVAVTLSPKLSHKECTLYPVEGPYDLFFCFLEGDDNVTLGVIYDPIIFSTADVARLKDEFSSLRERSMTDPSFGVSGISGVQSHLPRLLPELDLSNVDEISAARFHAWFEQQALAHPNLVALHSAERNLSVTYKELNERSNRLGHYLREIGISRGSLVLLYLEHGPAVMEWIIAVLKAGAAYAVADQSNPPERIRSIVSVAEPVLVIHDQKGEAIREIIQESPVKTLDIRTVQIEKFSSESLEEVTQNTDLAYIVFTSGSTGQPKGVEIEHRNLSHFVANAFTSNYTTIGPGTRVLQLATFAFDAAVLEWSQCLSLGGTLCFADVPKALVGDYLADVIDLNEVSFMHLTPSVLATLPTSRPLPSLRQISVGGEMVPDNLIKKWRSRVQVVNAYGPTECTVVMAHQPQPIASDAPQPAANIIGAAHQHMKFYVSNDAFTRLLPAGEVGEVCIGGPQVGRGYKSRPDLTENRFAVHPELGARLYRTGDRGKLLGDGSVFLVGRIDREVKVRGDIELDDVERTITDVMPEVTAVSVQPDSSSTSLWAFVSPDDIDGDVLRNRLTERLPAYMVPSTVYALPQLPLNMNGKVDHKSIAANMESLIVEATTSGSSSSATPSLVSSGSTTCRSPSTSSCSDSRSASPAITSAVTRIWQDILGTKGLITTSDNFFDLGGNSLSANKLATQLRSEFSSSNITVLDIFSSPTIQGQVDLLCGSELDSYVQSKLDSLGRGRTKSPAKIVDSQGRSSPSTIPSGGRKSEIAIVGISGRFPGASNPDELYRLFRDRKEGISELEGSSGVLPFPGAIYVPRRGAIKDVEYFDPAAWGLKEDEARNMDPQQRLFMESTLRALQDANRVPSIQGTNNIGLFVGAARDTWQDATETVYGDEFYRTHRADLTPSISARTAYHLNLQGPNVTLNTACSSGMVALSVAVDQLRAGRCDMAVAGAVAIAFPQEGYVTAESQIFSPSGHCRPFDHRADGTLPADGVCALVLRPLDDAVRDGDKIYSVISGIATGSDGRLDKAGVTAPSPRGQADTIERAWKDAGIPMSKAVYAELHGSGTPIGDALELEGFQMARSRLGAANNRCTVGSNKGNLGNCEAASGLVSVIKMCKSMQYGVIPPVQSLERVNPLINPSLPFDIAQTDLPLSDDAVVCVSSTGLGGVNAHCVLRS.

The condensation (C) domain stretch occupies residues 27-392 (YPMTKAQESL…RGLETPRAQV (366 aa)). Residues 522-919 (TYKELNERSN…TITDVMPEVT (398 aa)) form an adenylation (A) domain region. Residues 995 to 1028 (TSGSSSSATPSLVSSGSTTCRSPSTSSCSDSRSA) form a disordered region. In terms of domain architecture, Carrier spans 1027-1104 (SASPAITSAV…GQVDLLCGSE (78 aa)). An O-(pantetheine 4'-phosphoryl)serine modification is found at S1063. A disordered region spans residues 1116 to 1144 (LGRGRTKSPAKIVDSQGRSSPSTIPSGGR). Polar residues predominate over residues 1131 to 1140 (QGRSSPSTIP). The 414-residue stretch at 1145 to 1558 (KSEIAIVGIS…GVNAHCVLRS (414 aa)) folds into the Ketosynthase family 3 (KS3) domain. Catalysis depends on for beta-ketoacyl synthase activity residues C1308, H1444, and N1484.

This sequence in the N-terminal section; belongs to the NRP synthetase family. It depends on pantetheine 4'-phosphate as a cofactor.

The enzyme catalyses acetoacetyl-CoA + L-isoleucine + ATP = tenuazonic acid + AMP + diphosphate + CoA + 2 H(+). Functionally, hybrid PKS-NRPS synthetase that mediates the biosynthesis of the toxin tenuazonic acid (TeA), an inhibitor of protein biosynthesis on ribosomes by suppressing the release of new protein. TAS1 alone is sufficient for TeA synthesis via the condensation of isoleucine (Ile) with acetoacetyl-CoA by the N-terminal NRPS module and subsequent cyclization conducted by the C-terminal KS domain. The polypeptide is Hybrid PKS-NRPS synthetase TAS1 (Gloeophyllum trabeum (strain ATCC 11539 / FP-39264 / Madison 617) (Brown rot fungus)).